A 363-amino-acid polypeptide reads, in one-letter code: D-alanine--D-alanine ligase (363 aa).

The region spanning 146–352 (KLCAADAGVA…FTALIDKLLH (207 aa)) is the ATP-grasp domain. Residue 179 to 234 (DSTFGYPLFVKPASLGSSVGISKVHLPAALPEALKVACSYDRKILVEAAVSGKEIE) participates in ATP binding. The Mg(2+) site is built by Asp-305, Glu-319, and Asn-321.

The protein belongs to the D-alanine--D-alanine ligase family. Mg(2+) serves as cofactor. Mn(2+) is required as a cofactor.

Its subcellular location is the cytoplasm. It catalyses the reaction 2 D-alanine + ATP = D-alanyl-D-alanine + ADP + phosphate + H(+). It functions in the pathway cell wall biogenesis; peptidoglycan biosynthesis. Its function is as follows. Cell wall formation. This is D-alanine--D-alanine ligase from Chlorobium limicola (strain DSM 245 / NBRC 103803 / 6330).